A 520-amino-acid polypeptide reads, in one-letter code: MSGGLLVAGTASDAGKSVLTAGICRWLAREGVRVAPFKAQNMALNSAVTADGAEIGRAQAMQAAAAGVEPEAAMNPVLLKPGGQRHSQLVVLGRPVAEVDALGYRPYKERLAAIVLECLDDLRGRFDAVICEGAGSPAEINLRSTDIANMGLARAANLPVIVVGDIDKGGVFAALFGTLALLDAADQALVAGWVINRFRGDARLLEPGLRQIERLTGRPVHGVVPWKAGLWLDVEDSLDLAAFPDAEPCPDAEPCPDAEPCPEARPASHGGRREVLRVAVIRLPRLSNVTDIDALRVEPGVAVRLATRPDELADADLVILPGTRSTVEDLRWLRRRGLAAALAERAAAARPVLGICGGYQILGRRIRDDVESGAGEVDGLGLLPVITTFDPVKLLGRRAATDAAGRPLTGYEIRHGRLTVEEHPDSAPFAADGVRVGAVAGTSWHGVLENDAFRRAYLADVATAAGRSFVPAFTCFADARQRRLDALGDLVADHLDTGALRRLLAEGTPAGLPFVPPGAS.

The region spanning 275–453 (VLRVAVIRLP…WHGVLENDAF (179 aa)) is the GATase cobBQ-type domain. Cysteine 356 (nucleophile) is an active-site residue. Residue histidine 445 is part of the active site.

This sequence belongs to the CobB/CobQ family. CobQ subfamily.

The protein operates within cofactor biosynthesis; adenosylcobalamin biosynthesis. Catalyzes amidations at positions B, D, E, and G on adenosylcobyrinic A,C-diamide. NH(2) groups are provided by glutamine, and one molecule of ATP is hydrogenolyzed for each amidation. The chain is Cobyric acid synthase from Frankia casuarinae (strain DSM 45818 / CECT 9043 / HFP020203 / CcI3).